Here is a 79-residue protein sequence, read N- to C-terminus: uncharacterized protein (79 aa).

The interval 1–27 (MRQRGQEHLPTSVKSEPRACNNPTVAE) is disordered.

This is an uncharacterized protein from Homo sapiens (Human).